The following is a 168-amino-acid chain: uncharacterized protein (168 aa).

Disordered stretches follow at residues 37-74 (GGSK…SQFT), 81-100 (QYNY…PNYY), and 117-168 (MQPF…EETN). Composition is skewed to polar residues over residues 52–74 (HSGQ…SQFT) and 82–95 (YNYN…TRSV). Positions 120–129 (FNNQSFNNQS) are enriched in low complexity. The segment covering 130 to 158 (RTHQSKTYQHNQQKRSFNGPRNNGPQNNV) has biased composition (polar residues).

This is an uncharacterized protein from Acanthamoeba polyphaga (Amoeba).